The primary structure comprises 603 residues: Extracellular basic protease (603 aa).

The N-terminal stretch at 1–21 (MNLSNISAVKVLTLVVSAAIA) is a signal peptide. A propeptide spanning residues 22–132 (GQVCAAESIV…VEVDRLAYPK (111 aa)) is cleaved from the precursor. The Peptidase S8 domain maps to 143-468 (QWHYFGNYGV…SGIVDANAAV (326 aa)). Aspartate 173 acts as the Charge relay system in catalysis. Residues 197 to 221 (PNARDGDQRDNNPADEGDWFDNWDC) are disordered. Cystine bridges form between cysteine 221–cysteine 273 and cysteine 315–cysteine 352. The active-site Charge relay system is the histidine 237. The Charge relay system role is filled by serine 409. Positions 477–603 (RAQPRPPVNQ…GSIDSWSLTF (127 aa)) are excised as a propeptide. Positions 478–603 (AQPRPPVNQP…GSIDSWSLTF (126 aa)) constitute a P/Homo B domain.

Belongs to the peptidase S8 family.

It localises to the secreted. The protein is Extracellular basic protease (bprV) of Dichelobacter nodosus (Bacteroides nodosus).